Consider the following 232-residue polypeptide: MSIAHSIRAQIPPIHPEGYPFIGGFAFASLILFWLWAPLGWIGVVLTIWCALFFRDPVRTTPVREGLVIAPADGRVSMVTPVVPPAELGLGDQPLMRISIFMSVFNCHVNRSPVAGRIERIAYRPGKFINAELDKASEDNERNSLVISTPAGRIGVVQIAGLVARRIVSFVREGESLAAGQRFGLIRFGSRLDVFLPEGGKPLVSVGQTAVAGETVLADFQIGDGGRVYRTD.

The Schiff-base intermediate with substrate; via pyruvic acid role is filled by serine 190. A Pyruvic acid (Ser); by autocatalysis modification is found at serine 190.

It belongs to the phosphatidylserine decarboxylase family. PSD-A subfamily. In terms of assembly, heterodimer of a large membrane-associated beta subunit and a small pyruvoyl-containing alpha subunit. The cofactor is pyruvate. Is synthesized initially as an inactive proenzyme. Formation of the active enzyme involves a self-maturation process in which the active site pyruvoyl group is generated from an internal serine residue via an autocatalytic post-translational modification. Two non-identical subunits are generated from the proenzyme in this reaction, and the pyruvate is formed at the N-terminus of the alpha chain, which is derived from the carboxyl end of the proenzyme. The post-translation cleavage follows an unusual pathway, termed non-hydrolytic serinolysis, in which the side chain hydroxyl group of the serine supplies its oxygen atom to form the C-terminus of the beta chain, while the remainder of the serine residue undergoes an oxidative deamination to produce ammonia and the pyruvoyl prosthetic group on the alpha chain.

The protein resides in the cell membrane. The catalysed reaction is a 1,2-diacyl-sn-glycero-3-phospho-L-serine + H(+) = a 1,2-diacyl-sn-glycero-3-phosphoethanolamine + CO2. It functions in the pathway phospholipid metabolism; phosphatidylethanolamine biosynthesis; phosphatidylethanolamine from CDP-diacylglycerol: step 2/2. Its function is as follows. Catalyzes the formation of phosphatidylethanolamine (PtdEtn) from phosphatidylserine (PtdSer). This chain is Phosphatidylserine decarboxylase proenzyme, found in Afipia carboxidovorans (strain ATCC 49405 / DSM 1227 / KCTC 32145 / OM5) (Oligotropha carboxidovorans).